The chain runs to 62 residues: Small ribosomal subunit protein eS27 (62 aa).

Zn(2+) contacts are provided by Cys-17, Cys-20, Cys-36, and Cys-39. The segment at 17 to 39 (CPDCENEQTIFDRACTPVDCIVC) adopts a C4-type zinc-finger fold.

It belongs to the eukaryotic ribosomal protein eS27 family. Part of the 30S ribosomal subunit. Requires Zn(2+) as cofactor.

The sequence is that of Small ribosomal subunit protein eS27 from Methanospirillum hungatei JF-1 (strain ATCC 27890 / DSM 864 / NBRC 100397 / JF-1).